The primary structure comprises 932 residues: F-box protein COS111 (932 aa).

The interval 29–63 is disordered; sequence VSAKHRPSSTGVYGHDASTVDHASRSNNNLNLTRS. A compositionally biased stretch (low complexity) spans 53-63; sequence RSNNNLNLTRS. The region spanning 146 to 193 is the F-box domain; it reads RKEISDLPDEVLRNILSNVKDDQRTLVNCLYVNKAFYNATKPTLYERP. Positions 346 to 358 are enriched in polar residues; that stretch reads LSEGKSSDNGNNG. Disordered regions lie at residues 346 to 369, 389 to 450, 470 to 500, and 863 to 893; these read LSEGKSSDNGNNGKRQRSNSSVSS, TLSG…SNWF, ISSKKDEQQNEESAQTAQKIETPIIKRTEPF, and SVLPEDVPEDNNADDTNNGENTIAQPFSNDP. 2 stretches are compositionally biased toward low complexity: residues 395-431 and 438-447; these read NNSSKTQSKGKSSSSPGNPNDSSGEQDSIISSSSQID and TSSKSTSSTS. Residues 876 to 890 show a composition bias toward polar residues; it reads DDTNNGENTIAQPFS.

Its function is as follows. F-box protein probably involved in ubiquitin conjugation pathway. This is F-box protein COS111 (COS111) from Candida glabrata (strain ATCC 2001 / BCRC 20586 / JCM 3761 / NBRC 0622 / NRRL Y-65 / CBS 138) (Yeast).